Consider the following 320-residue polypeptide: Acetyl-coenzyme A carboxylase carboxyl transferase subunit alpha (320 aa).

Residues A33–A294 enclose the CoA carboxyltransferase C-terminal domain.

This sequence belongs to the AccA family. As to quaternary structure, acetyl-CoA carboxylase is a heterohexamer composed of biotin carboxyl carrier protein (AccB), biotin carboxylase (AccC) and two subunits each of ACCase subunit alpha (AccA) and ACCase subunit beta (AccD).

The protein resides in the cytoplasm. It carries out the reaction N(6)-carboxybiotinyl-L-lysyl-[protein] + acetyl-CoA = N(6)-biotinyl-L-lysyl-[protein] + malonyl-CoA. It functions in the pathway lipid metabolism; malonyl-CoA biosynthesis; malonyl-CoA from acetyl-CoA: step 1/1. Its function is as follows. Component of the acetyl coenzyme A carboxylase (ACC) complex. First, biotin carboxylase catalyzes the carboxylation of biotin on its carrier protein (BCCP) and then the CO(2) group is transferred by the carboxyltransferase to acetyl-CoA to form malonyl-CoA. The protein is Acetyl-coenzyme A carboxylase carboxyl transferase subunit alpha of Caulobacter vibrioides (strain ATCC 19089 / CIP 103742 / CB 15) (Caulobacter crescentus).